A 234-amino-acid polypeptide reads, in one-letter code: Carboxy-S-adenosyl-L-methionine synthase (234 aa).

Residues tyrosine 35, 60–62 (GCS), 83–84 (DN), and arginine 191 each bind S-adenosyl-L-methionine.

This sequence belongs to the class I-like SAM-binding methyltransferase superfamily. Cx-SAM synthase family. Homodimer.

The catalysed reaction is prephenate + S-adenosyl-L-methionine = carboxy-S-adenosyl-L-methionine + 3-phenylpyruvate + H2O. Its function is as follows. Catalyzes the conversion of S-adenosyl-L-methionine (SAM) to carboxy-S-adenosyl-L-methionine (Cx-SAM). The polypeptide is Carboxy-S-adenosyl-L-methionine synthase (Campylobacter lari (strain RM2100 / D67 / ATCC BAA-1060)).